Reading from the N-terminus, the 404-residue chain is XK-related protein 8 (404 aa).

8 consecutive transmembrane segments (helical) span residues 14-34, 44-64, 167-187, 206-226, 227-247, 263-283, 292-312, and 319-339; these read FVFS…DVWV, FFWF…VQMF, AVQF…VVDY, SLIY…ALAL, FASV…LVFV, GEWL…FNVA, AIYH…WWCC, and EPYA…GLLF.

This sequence belongs to the XK family.

It localises to the cell membrane. It carries out the reaction a 1,2-diacyl-sn-glycero-3-phospho-L-serine(in) = a 1,2-diacyl-sn-glycero-3-phospho-L-serine(out). Its function is as follows. Phospholipid scramblase that promotes phosphatidylserine exposure on apoptotic cell surface, possibly by mediating phospholipid scrambling. Phosphatidylserine is a specific marker only present at the surface of apoptotic cells and acts as a specific signal for engulfment. The sequence is that of XK-related protein 8 from Tetraodon nigroviridis (Spotted green pufferfish).